The sequence spans 893 residues: Probable disease resistance protein At1g62630 (893 aa).

A coiled-coil region spans residues 24–68 (GSYTHNLEKNLVALETTMEELKAKRDDLLRRLKREEDRGLQRLSE). Residues 136–440 (TEQASTSAFE…CEEIIDGSEG (305 aa)) enclose the NB-ARC domain. Residue 179–186 (GMGGVGKT) coordinates ATP. LRR repeat units follow at residues 516 to 537 (VVRRMSLMGNKIHHLVGSYECM), 538 to 559 (ELTTLLLGEGEYGSIWRWSEIK), 571 to 593 (KLAVLDLSHNQSLFELPEEISNL), 595 to 617 (SLKYLNLSHTGIRHLSKGIQELK), 618 to 640 (KIIHLNLEHTSKLESIDGISSLH), and 641 to 663 (NLKVLKLYGSRLPWDLNTVKELE).

This sequence belongs to the disease resistance NB-LRR family.

Functionally, probable disease resistance protein. This is Probable disease resistance protein At1g62630 from Arabidopsis thaliana (Mouse-ear cress).